Here is a 754-residue protein sequence, read N- to C-terminus: Probable beta-glucosidase D (754 aa).

The first 20 residues, 1 to 20 (MKVLSFIVAAALLGLTGASS), serve as a signal peptide directing secretion. N-linked (GlcNAc...) asparagine glycosylation is found at asparagine 66, asparagine 69, and asparagine 186. Residues 186 to 206 (NRTGGGGGGGGDSGSAPYSSN) are disordered. Residues 188 to 198 (TGGGGGGGGDS) show a composition bias toward gly residues. Asparagine 239 is a glycosylation site (N-linked (GlcNAc...) asparagine). Residue aspartate 267 is part of the active site. N-linked (GlcNAc...) asparagine glycans are attached at residues asparagine 301, asparagine 345, asparagine 443, asparagine 512, asparagine 534, asparagine 573, asparagine 588, asparagine 655, and asparagine 745.

The protein belongs to the glycosyl hydrolase 3 family.

Its subcellular location is the secreted. The enzyme catalyses Hydrolysis of terminal, non-reducing beta-D-glucosyl residues with release of beta-D-glucose.. Its pathway is glycan metabolism; cellulose degradation. Its function is as follows. Beta-glucosidases are one of a number of cellulolytic enzymes involved in the degradation of cellulosic biomass. Catalyzes the last step releasing glucose from the inhibitory cellobiose. This chain is Probable beta-glucosidase D (bglD), found in Aspergillus niger (strain ATCC MYA-4892 / CBS 513.88 / FGSC A1513).